Consider the following 70-residue polypeptide: MGVLAAAIAIGLAALGAGIGNGLIVSRTVEGIARQPEARGMLQTTMFIGVALVEAIPIIAVVIAFMVQGR.

The next 2 membrane-spanning stretches (helical) occupy residues 5 to 25 (AAAIAIGLAALGAGIGNGLIV) and 47 to 67 (FIGVALVEAIPIIAVVIAFMV).

This sequence belongs to the ATPase C chain family. As to quaternary structure, F-type ATPases have 2 components, F(1) - the catalytic core - and F(0) - the membrane proton channel. F(1) has five subunits: alpha(3), beta(3), gamma(1), delta(1), epsilon(1). F(0) has three main subunits: a(1), b(2) and c(10-14). The alpha and beta chains form an alternating ring which encloses part of the gamma chain. F(1) is attached to F(0) by a central stalk formed by the gamma and epsilon chains, while a peripheral stalk is formed by the delta and b chains.

It is found in the cell membrane. Its function is as follows. F(1)F(0) ATP synthase produces ATP from ADP in the presence of a proton or sodium gradient. F-type ATPases consist of two structural domains, F(1) containing the extramembraneous catalytic core and F(0) containing the membrane proton channel, linked together by a central stalk and a peripheral stalk. During catalysis, ATP synthesis in the catalytic domain of F(1) is coupled via a rotary mechanism of the central stalk subunits to proton translocation. In terms of biological role, key component of the F(0) channel; it plays a direct role in translocation across the membrane. A homomeric c-ring of between 10-14 subunits forms the central stalk rotor element with the F(1) delta and epsilon subunits. The sequence is that of ATP synthase subunit c from Anoxybacillus flavithermus (strain DSM 21510 / WK1).